The primary structure comprises 1198 residues: DNA polymerase (1198 aa).

Disordered stretches follow at residues 1–87, 179–199, and 904–930; these read MALV…PRGT, LEQPDGQGQAAEVEDHQPNPP, and QLALADSDAEESEDERAPTPFYSPPSG. 2 stretches are compositionally biased toward low complexity: residues 30-40 and 57-68; these read QQPTRAAPAPA and APPTSGGSPASP.

Belongs to the DNA polymerase type-B family. Heterodimer with the terminal protein; this heterodimer binds to bp 9 to 18 of the genome. Forms a complex with viral pTP, DBP and hosts NFIA and POU2F1/OCT1 for initiation of replication.

The protein localises to the host nucleus. The enzyme catalyses DNA(n) + a 2'-deoxyribonucleoside 5'-triphosphate = DNA(n+1) + diphosphate. Eukaryotic-type DNA polymerase involved in viral genomic replication. DNA synthesis is protein primed, and acts in a strand displacement replication. Assembles in complex with viral pTP, DBP, host NFIA and host POU2F1/OCT1 on viral origin of replication. The polymerase covalently transfers dCMP onto pTP, thereby initiating complementary strand synthesis. This is DNA polymerase from Homo sapiens (Human).